The chain runs to 436 residues: 3-hydroxy-3-methylglutaryl-coenzyme A reductase (436 aa).

Active-site charge relay system residues include glutamate 99, lysine 277, and aspartate 293. The Proton donor role is filled by histidine 390.

Belongs to the HMG-CoA reductase family.

The enzyme catalyses (R)-mevalonate + 2 NADP(+) + CoA = (3S)-3-hydroxy-3-methylglutaryl-CoA + 2 NADPH + 2 H(+). The protein operates within metabolic intermediate biosynthesis; (R)-mevalonate biosynthesis; (R)-mevalonate from acetyl-CoA: step 3/3. Functionally, converts HMG-CoA to mevalonate. This chain is 3-hydroxy-3-methylglutaryl-coenzyme A reductase (hmgA), found in Archaeoglobus fulgidus (strain ATCC 49558 / DSM 4304 / JCM 9628 / NBRC 100126 / VC-16).